Reading from the N-terminus, the 495-residue chain is MRGTPLLLVSLFALLQPGDCRLANAEEKLMDDLLNKTRYNNLIRPATSSSQLISIRLELSLSQLISVNEREQIMTTSIWLKQEWTDYRLAWNSSCYEGVNILRIPAKRVWLPDIVLYNNADGTYEVSVYTNVIVRSNGSIQWLPPAIYKSACKIEVKHFPFDQQNCTLKFRSWTYDHTEIDMVLKSPTAIMDDFTPSGEWDIVALPGRRTVNPQDPSYVDVTYDFIIKRKPLFYTINLIIPCVLITSLAILVFYLPSDCGEKMTLCISVLLALTFFLLLISKIVPPTSLDIPLIGKYLLFTMVLVTFSIVTTVCVLNVHHRSPSTHTMASWVKECFLHKLPTFLFMKRPGLEVSPARVPHSSQLHLTTAEATSTSALGPSSPSNLYGNSMYFVNPVPATPKSAVSSHTAGLPRDARLRSSGRFRQDLQEALEGVSFIAQHLESDDRDQSVIEDWKFVAMVVDRLFLWVFVIVCILGTMGLFLPPLFQIHAPSKGL.

Residues 1 to 20 (MRGTPLLLVSLFALLQPGDC) form the signal peptide. Topologically, residues 21-235 (RLANAEEKLM…IIKRKPLFYT (215 aa)) are extracellular. Asn35, Asn92, Asn137, and Asn165 each carry an N-linked (GlcNAc...) asparagine glycan. Cys152 and Cys166 are oxidised to a cystine. The helical transmembrane segment at 236-256 (INLIIPCVLITSLAILVFYLP) threads the bilayer. The Cytoplasmic portion of the chain corresponds to 257-264 (SDCGEKMT). Residue Glu261 participates in Na(+) binding. The helical transmembrane segment at 265-285 (LCISVLLALTFFLLLISKIVP) threads the bilayer. The Extracellular portion of the chain corresponds to 286–297 (PTSLDIPLIGKY). Residues 298–318 (LLFTMVLVTFSIVTTVCVLNV) traverse the membrane as a helical segment. Topologically, residues 319–463 (HHRSPSTHTM…WKFVAMVVDR (145 aa)) are cytoplasmic. The chain crosses the membrane as a helical span at residues 464-484 (LFLWVFVIVCILGTMGLFLPP). At 485–495 (LFQIHAPSKGL) the chain is on the extracellular side.

Belongs to the ligand-gated ion channel (TC 1.A.9) family. Acetylcholine receptor (TC 1.A.9.1) subfamily. Beta-4/CHRNB4 sub-subfamily. As to quaternary structure, neuronal AChR is composed of two different types of subunits: alpha and beta. CHRNB4/Beta-4 subunit can be combined to CHRNA2/alpha-2, CHRNA3/alpha-3 or CHRNA4/alpha-4, CHRNA5/alpha-5 and CHRNB3/beta-3 to give rise to functional receptors. Forms stoichiometries such as (CHRNA3)2:(CHRNB4)3 or (CHRNA3:CHRNB4)2:CHRNB3. Interacts with RIC3; which is required for proper folding and assembly. Interacts with LYPD6. In terms of tissue distribution, predominantly expressed by immature T-cells in the thymus.

The protein localises to the synaptic cell membrane. It localises to the cell membrane. It carries out the reaction K(+)(in) = K(+)(out). It catalyses the reaction Na(+)(in) = Na(+)(out). The enzyme catalyses Ca(2+)(in) = Ca(2+)(out). Activated by a myriad of ligands such as acetylcholine, cytisine, nicotine, choline and epibatidine. The heteropentamer CHRNA3:CHRNB4 activity is blocked by the alpha-conotoxin ImI and AuIB. Its function is as follows. Component of neuronal acetylcholine receptors (nAChRs) that function as pentameric, ligand-gated cation channels with high calcium permeability among other activities. nAChRs are excitatory neurotrasnmitter receptors formed by a collection of nAChR subunits known to mediate synaptic transmission in the nervous system and the neuromuscular junction. Each nAchR subunit confers differential attributes to channel properties, including activation, deactivation and desensitization kinetics, pH sensitivity, cation permeability, and binding to allosteric modulators. CHRNB4 forms heteropentameric neuronal acetylcholine receptors with CHRNA2, CHRNA3 and CHRNA4, as well as CHRNA5 and CHRNB3 as accesory subunits. CHRNA3:CHRNB4 being predominant in neurons of the autonomic ganglia, it is known as ganglionic nicotinic receptor. CHRNA3:CHRNB4 or CHRNA3:CHRNA5:CHRNB4 play also an important role in the habenulo-interpeduncular tract, modulating the mesolimbic dopamine system and affecting reward circuits and addiction. Hypothalamic CHRNA3:CHRNB4 nAChR activation by nicotine leads to activation of POMC neurons and a decrease in food intake. This chain is Neuronal acetylcholine receptor subunit beta-4 (Chrnb4), found in Mus musculus (Mouse).